Reading from the N-terminus, the 342-residue chain is Cell division protein ZipA (342 aa).

The Periplasmic segment spans residues 1-6 (MEDLQL). A helical membrane pass occupies residues 7 to 27 (VLFILGAIAIVAVLVHGFWSI). Residues 28 to 342 (RRQQPKSLKD…DYLHRIRANA (315 aa)) are Cytoplasmic-facing. Positions 33 to 57 (KSLKDSPMGNFYKQQADKESPPKRV) are disordered. Positions 47-57 (QADKESPPKRV) are enriched in basic and acidic residues.

It belongs to the ZipA family. In terms of assembly, interacts with FtsZ via their C-terminal domains.

The protein resides in the cell inner membrane. Its function is as follows. Essential cell division protein that stabilizes the FtsZ protofilaments by cross-linking them and that serves as a cytoplasmic membrane anchor for the Z ring. Also required for the recruitment to the septal ring of downstream cell division proteins. In Shewanella putrefaciens (strain CN-32 / ATCC BAA-453), this protein is Cell division protein ZipA.